The following is a 91-amino-acid chain: Mercuric transport protein periplasmic component (91 aa).

The first 19 residues, 1–19 (MKKLLSALALAAVVAPVWA), serve as a signal peptide directing secretion. The HMA domain maps to 22-88 (QTVTLSVPGM…ATEDAGYPSS (67 aa)). Hg(2+) is bound by residues C33 and C36.

Belongs to the MerP family. As to quaternary structure, monomer.

It localises to the periplasm. Involved in mercury resistance. Acts as a mercury scavenger that specifically binds to a mercuric ion in the periplasm and probably passes it to the cytoplasmic mercuric reductase MerA via the mercuric transport protein MerT. The chain is Mercuric transport protein periplasmic component from Pseudomonas fluorescens.